The primary structure comprises 338 residues: uncharacterized protein (338 aa).

Helical transmembrane passes span 13–33, 71–91, 110–130, 176–196, 218–238, and 301–321; these read PAYS…DFLM, GLYS…ALFF, TLCF…VYVP, YGYR…LLFY, LITG…LDVA, and FRGF…MFVF. 3 Solcar repeats span residues 13–100, 108–202, and 216–328; these read PAYS…TKRH, PETL…LRQV, and RELI…IIRL.

The protein belongs to the mitochondrial carrier (TC 2.A.29) family.

It is found in the mitochondrion inner membrane. Its function is as follows. Mitochondrial solute carriers shuttle metabolites, nucleotides, and cofactors through the mitochondrial inner membrane. This is an uncharacterized protein from Schizosaccharomyces pombe (strain 972 / ATCC 24843) (Fission yeast).